Reading from the N-terminus, the 210-residue chain is Proteasome subunit beta (210 aa).

The propeptide at 1–9 is removed in mature form; by autocatalysis; the sequence is MDNDKYLKG. Thr-10 serves as the catalytic Nucleophile.

This sequence belongs to the peptidase T1B family. In terms of assembly, the 20S proteasome core is composed of 14 alpha and 14 beta subunits that assemble into four stacked heptameric rings, resulting in a barrel-shaped structure. The two inner rings, each composed of seven catalytic beta subunits, are sandwiched by two outer rings, each composed of seven alpha subunits. The catalytic chamber with the active sites is on the inside of the barrel. Has a gated structure, the ends of the cylinder being occluded by the N-termini of the alpha-subunits. Is capped at one or both ends by the proteasome regulatory ATPase, PAN.

The protein resides in the cytoplasm. It catalyses the reaction Cleavage of peptide bonds with very broad specificity.. Its activity is regulated as follows. The formation of the proteasomal ATPase PAN-20S proteasome complex, via the docking of the C-termini of PAN into the intersubunit pockets in the alpha-rings, triggers opening of the gate for substrate entry. Interconversion between the open-gate and close-gate conformations leads to a dynamic regulation of the 20S proteasome proteolysis activity. Its function is as follows. Component of the proteasome core, a large protease complex with broad specificity involved in protein degradation. In Methanosarcina mazei (strain ATCC BAA-159 / DSM 3647 / Goe1 / Go1 / JCM 11833 / OCM 88) (Methanosarcina frisia), this protein is Proteasome subunit beta.